The primary structure comprises 350 residues: Protein RecA (350 aa).

65–72 serves as a coordination point for ATP; sequence GPESSGKT. The tract at residues 329–350 is disordered; that stretch reads ASPDVKANPVKETEDDMADADI. Residues 341-350 are compositionally biased toward acidic residues; it reads TEDDMADADI.

It belongs to the RecA family.

The protein resides in the cytoplasm. Can catalyze the hydrolysis of ATP in the presence of single-stranded DNA, the ATP-dependent uptake of single-stranded DNA by duplex DNA, and the ATP-dependent hybridization of homologous single-stranded DNAs. It interacts with LexA causing its activation and leading to its autocatalytic cleavage. In Pseudomonas fluorescens (strain ATCC BAA-477 / NRRL B-23932 / Pf-5), this protein is Protein RecA.